The following is an 874-amino-acid chain: MKAAEIREKFLKFFESKGHTIVRSSSLVPGNDPTLLFTNSGMVQFKDVFLGAETRPYSRATTAQRSVRAGGKHNDLENVGYTARHHTFFEMLGNFSFGDYFKRDAIHYAWELLTSVYKLPADKLWVTVYHDDDEAYDIWAKEVGVPAERIIRIGDNKGARYASDNFWQMGDTGPCGPCSEIFYDHGPDVWGGPPGSPEEDGDRYIEIWNLVFMQFNRDAQGNMTRLPKPCVDTGMGLERIAAVLQHVHSNYEIDLFQQLIKASARETGVADLANNSLKVIADHIRACSFLIVDGVIPGNEGRGYVLRRIVRRAIRHGYKLGRKAPFFHKLVADLVAEMGAAYPELKEAEPRVTDVLRQEEERFFETIEHGMSILEAALAELDAAGGKTLDGELAFKLHDTYGFPLDLTADVCRERGVTVDEPAFDDAMARQREQARAAGKFKATQGLEYTGAKTTFHGYEEIAFDDAKVVALYVEGASVGEVKAGESAVVVLDHTPFYAESGGQVGDQGVLANAATRFAVGDTLKVQADVIGHHGELEQGTLKVGDVVRAEIDAARRARTARNHSATHLMHKALRDVLGSHVQQKGSLVDADKTRFDFAHNAPLTDDEIRRVEAIVNEQVLANAPGIVRVMPYDDAVKGGAMALFGEKYGDEVRVLDLGFSRELCGGTHVHRTGDIGLFKIVAEGGVAAGIRRVEAITGDNAVRYVQALDARVNAAAAALKAQPSELLQRIGQVQDQVKSLEKELGALKSRLASSQGDELAQQAVEVGGVHVLAATLDGADAKTLRETVDKLKDKLKSAAIVLAAVDGGKVSLIAGVTADASKKVKAGELVNFVAQQVGGKGGGRPDMAQAGGTEPAKLPAALAGVKGWVEARL.

The Zn(2+) site is built by H564, H568, C665, and H669.

The protein belongs to the class-II aminoacyl-tRNA synthetase family. Zn(2+) is required as a cofactor.

It is found in the cytoplasm. The catalysed reaction is tRNA(Ala) + L-alanine + ATP = L-alanyl-tRNA(Ala) + AMP + diphosphate. Its function is as follows. Catalyzes the attachment of alanine to tRNA(Ala) in a two-step reaction: alanine is first activated by ATP to form Ala-AMP and then transferred to the acceptor end of tRNA(Ala). Also edits incorrectly charged Ser-tRNA(Ala) and Gly-tRNA(Ala) via its editing domain. The sequence is that of Alanine--tRNA ligase from Burkholderia pseudomallei (strain 668).